Here is a 285-residue protein sequence, read N- to C-terminus: Pantothenate synthetase (285 aa).

33 to 40 is an ATP binding site; that stretch reads MGALHEGH. His40 serves as the catalytic Proton donor. Gln64 serves as a coordination point for (R)-pantoate. Gln64 contributes to the beta-alanine binding site. An ATP-binding site is contributed by 150-153; the sequence is GEKD. Gln156 contacts (R)-pantoate. ATP is bound by residues Ala179 and 187–190; that span reads LSSR.

Belongs to the pantothenate synthetase family. In terms of assembly, homodimer.

It localises to the cytoplasm. It catalyses the reaction (R)-pantoate + beta-alanine + ATP = (R)-pantothenate + AMP + diphosphate + H(+). It participates in cofactor biosynthesis; (R)-pantothenate biosynthesis; (R)-pantothenate from (R)-pantoate and beta-alanine: step 1/1. In terms of biological role, catalyzes the condensation of pantoate with beta-alanine in an ATP-dependent reaction via a pantoyl-adenylate intermediate. The sequence is that of Pantothenate synthetase from Caulobacter vibrioides (strain ATCC 19089 / CIP 103742 / CB 15) (Caulobacter crescentus).